The primary structure comprises 502 residues: Probable malate:quinone oxidoreductase (502 aa).

Belongs to the MQO family. The cofactor is FAD.

It catalyses the reaction (S)-malate + a quinone = a quinol + oxaloacetate. The protein operates within carbohydrate metabolism; tricarboxylic acid cycle; oxaloacetate from (S)-malate (quinone route): step 1/1. The sequence is that of Probable malate:quinone oxidoreductase from Parasynechococcus marenigrum (strain WH8102).